A 313-amino-acid chain; its full sequence is MDVGIKGFGAYAPEKVVENTYFESFLETSDEWISQMTGIKERRWAGEDEETSDMAYQASLKAIEDAGIEASEIDMIIVATSTGDFPFPTVANILQERLGIGKVASMDQLAACSGFMYSMINAKQFVQSGDYKNILVVGVDKLSKITDFTDRSTAILFGDGAGAVVIGEVSEGRGILSYELGSDGSGAKHLYLNPENGKIFMNGREVFKFAVRIMGEASNNAVAKANLTADDVDMFVPHQANIRIMESARERLGIPKEKMSVSVDRFGNTSAASIPLSIGQELENGRIKDDDVLVLVGFGGGLTWGAVTLRWGK.

Catalysis depends on residues C112 and H238. An ACP-binding region spans residues 239 to 243 (QANIR). N268 is an active-site residue.

It belongs to the thiolase-like superfamily. FabH family. In terms of assembly, homodimer.

It localises to the cytoplasm. It carries out the reaction malonyl-[ACP] + acetyl-CoA + H(+) = 3-oxobutanoyl-[ACP] + CO2 + CoA. The protein operates within lipid metabolism; fatty acid biosynthesis. Its function is as follows. Catalyzes the condensation reaction of fatty acid synthesis by the addition to an acyl acceptor of two carbons from malonyl-ACP. Catalyzes the first condensation reaction which initiates fatty acid synthesis and may therefore play a role in governing the total rate of fatty acid production. Possesses both acetoacetyl-ACP synthase and acetyl transacylase activities. Its substrate specificity determines the biosynthesis of branched-chain and/or straight-chain of fatty acids. This chain is Beta-ketoacyl-[acyl-carrier-protein] synthase III, found in Staphylococcus saprophyticus subsp. saprophyticus (strain ATCC 15305 / DSM 20229 / NCIMB 8711 / NCTC 7292 / S-41).